An 852-amino-acid polypeptide reads, in one-letter code: Ubiquitin carboxyl-terminal hydrolase 4 (852 aa).

Residues 172-296 (ASGTVLLVDV…WSNAHPDFCV (125 aa)) enclose the Rhodanese domain. Residues 369–393 (RSSSSSSNINERPGSVPPQLSNGST) are disordered. One can recognise a USP domain in the interval 488-849 (VGLVNCGNSC…NAYVLFYHRI (362 aa)). Catalysis depends on cysteine 497, which acts as the Nucleophile. Catalysis depends on histidine 806, which acts as the Proton acceptor.

It belongs to the peptidase C19 family.

It localises to the cytoplasm. The protein localises to the late endosome membrane. The catalysed reaction is Thiol-dependent hydrolysis of ester, thioester, amide, peptide and isopeptide bonds formed by the C-terminal Gly of ubiquitin (a 76-residue protein attached to proteins as an intracellular targeting signal).. With respect to regulation, RFU1 is an inhibitor of deubiquitination activity. Its function is as follows. Ubiquitin thioesterase that acts at the late endosome/prevacuolar compartment to recover ubiquitin from ubiquitinated membrane proteins en route to the vacuole. Also removes ubiquitin from soluble proteins targeted to proteasomes. Is essential to maintain a normal level of free ubiquitin. Required for promoting coordination of DNA replication and avoids DNA overreplication. The sequence is that of Ubiquitin carboxyl-terminal hydrolase 4 (DOA4) from Eremothecium gossypii (strain ATCC 10895 / CBS 109.51 / FGSC 9923 / NRRL Y-1056) (Yeast).